The primary structure comprises 298 residues: MATH domain and coiled-coil domain-containing protein At3g58280 (298 aa).

In terms of domain architecture, MATH spans 9 to 128; it reads KKTFGWVIKD…NGEITIIAEV (120 aa). A coiled-coil region spans residues 240–288; that stretch reads NLDWLRQKFDQALEKQIAYDTRIGELEKQVKKRKLAVTELEADLEKEKA.

This chain is MATH domain and coiled-coil domain-containing protein At3g58280, found in Arabidopsis thaliana (Mouse-ear cress).